Reading from the N-terminus, the 498-residue chain is 3-octaprenyl-4-hydroxybenzoate carboxy-lyase (498 aa).

N177 contributes to the Mn(2+) binding site. Prenylated FMN-binding positions include 180–182, 194–196, and 199–200; these read IYR, RWL, and RG. E243 is a Mn(2+) binding site. The active-site Proton donor is D292.

The protein belongs to the UbiD family. Homohexamer. Requires prenylated FMN as cofactor. Mn(2+) is required as a cofactor.

Its subcellular location is the cell membrane. The enzyme catalyses a 4-hydroxy-3-(all-trans-polyprenyl)benzoate + H(+) = a 2-(all-trans-polyprenyl)phenol + CO2. Its pathway is cofactor biosynthesis; ubiquinone biosynthesis. Catalyzes the decarboxylation of 3-octaprenyl-4-hydroxy benzoate to 2-octaprenylphenol, an intermediate step in ubiquinone biosynthesis. This Methylococcus capsulatus (strain ATCC 33009 / NCIMB 11132 / Bath) protein is 3-octaprenyl-4-hydroxybenzoate carboxy-lyase.